The primary structure comprises 1150 residues: ATP-dependent helicase/deoxyribonuclease subunit B (1150 aa).

Residue 8–15 (GRAGSGKS) coordinates ATP. Residues Cys786, Cys1106, Cys1109, and Cys1115 each coordinate [4Fe-4S] cluster.

Belongs to the helicase family. AddB/RexB type 1 subfamily. Heterodimer of AddA and AddB. Mg(2+) serves as cofactor. Requires [4Fe-4S] cluster as cofactor.

The heterodimer acts as both an ATP-dependent DNA helicase and an ATP-dependent, dual-direction single-stranded exonuclease. Recognizes the chi site generating a DNA molecule suitable for the initiation of homologous recombination. The AddB subunit has 5' -&gt; 3' nuclease activity but not helicase activity. The protein is ATP-dependent helicase/deoxyribonuclease subunit B of Clostridium botulinum (strain Okra / Type B1).